A 464-amino-acid chain; its full sequence is Heterogeneous nuclear ribonucleoprotein K (464 aa).

Residue methionine 1 is modified to N-acetylmethionine. A disordered region spans residues 1 to 37 (METEQPEETFPNTETNGEFGKRPAEDMEEEQAFKRSR). Positions 1 to 276 (METEQPEETF…GRGGRPMPPS (276 aa)) are necessary for interaction with DDX1. Basic and acidic residues predominate over residues 19-37 (FGKRPAEDMEEEQAFKRSR). At lysine 34 the chain carries N6-acetyllysine; alternate. Lysine 34 participates in a covalent cross-link: Glycyl lysine isopeptide (Lys-Gly) (interchain with G-Cter in SUMO1); alternate. Residue lysine 34 forms a Glycyl lysine isopeptide (Lys-Gly) (interchain with G-Cter in SUMO2); alternate linkage. Serine 36 carries the post-translational modification Phosphoserine. Residue threonine 39 is modified to Phosphothreonine. Residues 42-104 (MVELRILLQS…ETIGEILKKI (63 aa)) enclose the KH 1 domain. Residues lysine 52 and lysine 60 each participate in a glycyl lysine isopeptide (Lys-Gly) (interchain with G-Cter in SUMO2) cross-link. Repeat copies occupy residues 54 to 76 (AGAV…NASV) and 59 to 62 (GKGG). Residues 54–421 (AGAVIGKGGK…QIRHESGASI (368 aa)) are 2 X 22 AA approximate repeats. Positions 59-407 (GKGGKNIKAL…LAGSIIGKGG (349 aa)) are 5 X 4 AA repeats of G-X-G-G. Phosphoserine occurs at positions 75 and 116. A KH 2 domain is found at 144–209 (DCELRLLIHQ…DRVVECIKII (66 aa)). Residue lysine 163 forms a Glycyl lysine isopeptide (Lys-Gly) (interchain with G-Cter in SUMO1); alternate linkage. Residue lysine 163 forms a Glycyl lysine isopeptide (Lys-Gly) (interchain with G-Cter in SUMO2); alternate linkage. Lysine 198 bears the N6-acetyllysine mark. Residues 209 to 337 (ILDLISESPI…RPGDRYDGMV (129 aa)) are interaction with ZIK1. Phosphoserine is present on residues serine 214 and serine 216. Lysine 219 participates in a covalent cross-link: Glycyl lysine isopeptide (Lys-Gly) (interchain with G-Cter in SUMO2); alternate. Residue lysine 219 is modified to N6-succinyllysine; alternate. The interval 236–273 (YGGFTMMFDDRRGRPVGFPMRGRGGFDRMPPGRGGRPM) is RNA-binding RGG-box. 3 tandem repeats follow at residues 245–250 (DRRGRP), 257–260 (GRGG), and 267–270 (GRGG). The segment at 245–329 (DRRGRPVGFP…LMAYDRRGRP (85 aa)) is 2 X 6 AA approximate repeats. The tract at residues 250–329 (PVGFPMRGRG…LMAYDRRGRP (80 aa)) is disordered. Residues 252–266 (GFPMRGRGGFDRMPP) are compositionally biased toward low complexity. Basic and acidic residues predominate over residues 276–285 (SRRDYDDMSP). Residue serine 284 is modified to Phosphoserine. The stretch at 295–298 (GRGG) is one 3-4 repeat. Omega-N-methylarginine is present on arginine 316. Residues 324-329 (DRRGRP) form a 2-2 repeat. Position 377 is an omega-N-methylarginine (arginine 377). At serine 379 the chain carries Phosphoserine. At tyrosine 380 the chain carries Phosphotyrosine. In terms of domain architecture, KH 3 spans 387–451 (IITTQVTIPK…DQIQNAQYLL (65 aa)). A run of 2 repeats spans residues 399-421 (AGSI…GASI) and 404-407 (GKGG). Lysine 405 is subject to N6-acetyllysine; alternate. Residue lysine 405 forms a Glycyl lysine isopeptide (Lys-Gly) (interchain with G-Cter in SUMO2); alternate linkage. Serine 420 bears the Phosphoserine mark. Residue lysine 422 forms a Glycyl lysine isopeptide (Lys-Gly) (interchain with G-Cter in SUMO1); alternate linkage. Lysine 422 is covalently cross-linked (Glycyl lysine isopeptide (Lys-Gly) (interchain with G-Cter in SUMO2); alternate). Residue lysine 422 forms a Glycyl lysine isopeptide (Lys-Gly) (interchain with G-Cter in SUMO); alternate linkage.

Identified in the spliceosome C complex. Interacts with ANKRD28, RBM42 and ZIK1. Interacts with DDX1. Interacts with MDM2; this interaction leads to ubiquitination and proteasomal degradation. Interacts with p53/TP53. Interacts with BRDT. Interacts with IVNS1ABP. Interacts with PPIA/CYPA. Part of a transcription inhibitory ribonucleoprotein complex composed at least of the circular RNA circZNF827, ZNF827 and HNRNPL. Post-translationally, sumoylated by CBX4. Sumoylation is increased upon DNA damage, such as that produced by doxorubicin, etoposide, UV light and camptothecin, due to enhanced CBX4 phosphorylation by HIPK2 under these conditions. Ubiquitinated by MDM2. Doxorubicin treatment does not affect monoubiquitination, but slightly decreases HNRNPK poly-ubiquitination. In terms of processing, O-glycosylated (O-GlcNAcylated), in a cell cycle-dependent manner.

The protein resides in the cytoplasm. The protein localises to the nucleus. It localises to the nucleoplasm. Its subcellular location is the cell projection. It is found in the podosome. One of the major pre-mRNA-binding proteins. Binds tenaciously to poly(C) sequences. Likely to play a role in the nuclear metabolism of hnRNAs, particularly for pre-mRNAs that contain cytidine-rich sequences. Can also bind poly(C) single-stranded DNA. Plays an important role in p53/TP53 response to DNA damage, acting at the level of both transcription activation and repression. When sumoylated, acts as a transcriptional coactivator of p53/TP53, playing a role in p21/CDKN1A and 14-3-3 sigma/SFN induction. As far as transcription repression is concerned, acts by interacting with long intergenic RNA p21 (lincRNA-p21), a non-coding RNA induced by p53/TP53. This interaction is necessary for the induction of apoptosis, but not cell cycle arrest. As part of a ribonucleoprotein complex composed at least of ZNF827, HNRNPL and the circular RNA circZNF827 that nucleates the complex on chromatin, may negatively regulate the transcription of genes involved in neuronal differentiation. The sequence is that of Heterogeneous nuclear ribonucleoprotein K (HNRNPK) from Bos taurus (Bovine).